The following is a 122-amino-acid chain: Large ribosomal subunit protein uL14 (122 aa).

It belongs to the universal ribosomal protein uL14 family. As to quaternary structure, part of the 50S ribosomal subunit. Forms a cluster with proteins L3 and L19. In the 70S ribosome, L14 and L19 interact and together make contacts with the 16S rRNA in bridges B5 and B8.

In terms of biological role, binds to 23S rRNA. Forms part of two intersubunit bridges in the 70S ribosome. This Herpetosiphon aurantiacus (strain ATCC 23779 / DSM 785 / 114-95) protein is Large ribosomal subunit protein uL14.